Here is a 437-residue protein sequence, read N- to C-terminus: Bifunctional protein GlmU (437 aa).

Residues 1–223 (MHNTAVILAA…WDECRGVNSR (223 aa)) are pyrophosphorylase. UDP-N-acetyl-alpha-D-glucosamine is bound by residues 8–11 (LAAG), K22, Q70, 75–76 (GT), 96–98 (YGD), G135, E149, N164, and N221. D98 contributes to the Mg(2+) binding site. A Mg(2+)-binding site is contributed by N221. The interval 224–244 (AELAAAEAAMQSRLRAAALAA) is linker. Positions 245 to 437 (GVTMTAPETV…AELRMTKGKR (193 aa)) are N-acetyltransferase. Residues R310 and K328 each coordinate UDP-N-acetyl-alpha-D-glucosamine. H340 serves as the catalytic Proton acceptor. 2 residues coordinate UDP-N-acetyl-alpha-D-glucosamine: Y343 and N354. Residues A357, 363-364 (NY), S382, A400, and R417 each bind acetyl-CoA.

It in the N-terminal section; belongs to the N-acetylglucosamine-1-phosphate uridyltransferase family. The protein in the C-terminal section; belongs to the transferase hexapeptide repeat family. In terms of assembly, homotrimer. It depends on Mg(2+) as a cofactor.

It localises to the cytoplasm. The enzyme catalyses alpha-D-glucosamine 1-phosphate + acetyl-CoA = N-acetyl-alpha-D-glucosamine 1-phosphate + CoA + H(+). It carries out the reaction N-acetyl-alpha-D-glucosamine 1-phosphate + UTP + H(+) = UDP-N-acetyl-alpha-D-glucosamine + diphosphate. It functions in the pathway nucleotide-sugar biosynthesis; UDP-N-acetyl-alpha-D-glucosamine biosynthesis; N-acetyl-alpha-D-glucosamine 1-phosphate from alpha-D-glucosamine 6-phosphate (route II): step 2/2. Its pathway is nucleotide-sugar biosynthesis; UDP-N-acetyl-alpha-D-glucosamine biosynthesis; UDP-N-acetyl-alpha-D-glucosamine from N-acetyl-alpha-D-glucosamine 1-phosphate: step 1/1. The protein operates within bacterial outer membrane biogenesis; LPS lipid A biosynthesis. Its function is as follows. Catalyzes the last two sequential reactions in the de novo biosynthetic pathway for UDP-N-acetylglucosamine (UDP-GlcNAc). The C-terminal domain catalyzes the transfer of acetyl group from acetyl coenzyme A to glucosamine-1-phosphate (GlcN-1-P) to produce N-acetylglucosamine-1-phosphate (GlcNAc-1-P), which is converted into UDP-GlcNAc by the transfer of uridine 5-monophosphate (from uridine 5-triphosphate), a reaction catalyzed by the N-terminal domain. This Acidiphilium cryptum (strain JF-5) protein is Bifunctional protein GlmU.